The chain runs to 95 residues: Co-chaperonin GroES (95 aa).

The protein belongs to the GroES chaperonin family. In terms of assembly, heptamer of 7 subunits arranged in a ring. Interacts with the chaperonin GroEL.

It localises to the cytoplasm. Functionally, together with the chaperonin GroEL, plays an essential role in assisting protein folding. The GroEL-GroES system forms a nano-cage that allows encapsulation of the non-native substrate proteins and provides a physical environment optimized to promote and accelerate protein folding. GroES binds to the apical surface of the GroEL ring, thereby capping the opening of the GroEL channel. This Ruthia magnifica subsp. Calyptogena magnifica protein is Co-chaperonin GroES.